We begin with the raw amino-acid sequence, 459 residues long: Cysteine--tRNA ligase (459 aa).

Residue cysteine 27 participates in Zn(2+) binding. The 'HIGH' region motif lies at 29-39 (ITVYDDCHIGH). Zn(2+) is bound by residues cysteine 208, histidine 233, and glutamate 237. The short motif at 265-269 (KMSKS) is the 'KMSKS' region element. Lysine 268 is an ATP binding site.

This sequence belongs to the class-I aminoacyl-tRNA synthetase family. In terms of assembly, monomer. Zn(2+) serves as cofactor.

Its subcellular location is the cytoplasm. It carries out the reaction tRNA(Cys) + L-cysteine + ATP = L-cysteinyl-tRNA(Cys) + AMP + diphosphate. The protein is Cysteine--tRNA ligase of Francisella philomiragia subsp. philomiragia (strain ATCC 25017 / CCUG 19701 / FSC 153 / O#319-036).